The primary structure comprises 354 residues: MSLDRIMNEAISPWMKGDGPDSDIVLSSRIRLARNFKKYQFSTMQNEEEAKQIHELFKKKFIKKPVEPFGEFELLKMNELNPLQRRVLVEKHLISPNLAGTEYGACLLSESEHISIMLNEEDHVRIQCLFSGLQLSEALQSANQIDNWIEEQVEYAFDESLGYITSCPTNVGTGLRASVMIHLPGLVLTKRINRIIQVIQKLGLVVRGIYGEGSEALGNIFQVSNQMTLGKSEEDIIADLKSVIQQIIHQEKTARELIVQNSSIELEDKVYRSYGILANSRLIQSAEAATCLSDVRLGIDLGYIQGISRNILTELMVLTQPGILQQYAGGPLGPEERDYRRATLIRERLRIEQN.

Positions 24–254 constitute a Phosphagen kinase C-terminal domain; the sequence is IVLSSRIRLA…QQIIHQEKTA (231 aa). Residues 27–31, histidine 92, arginine 125, 176–180, and 207–212 each bind ATP; these read SSRIR, RASVM, and RGIYGE. The RDXXRA motif of the pArg binding pocket involved in allosteric regulation signature appears at 337–342; sequence RDYRRA.

The protein belongs to the ATP:guanido phosphotransferase family.

The enzyme catalyses L-arginyl-[protein] + ATP = N(omega)-phospho-L-arginyl-[protein] + ADP + H(+). Its activity is regulated as follows. Appears to be allosterically activated by the binding of pArg-containing polypeptides to the pArg-binding pocket localized in the C-terminal domain of McsB. Catalyzes the specific phosphorylation of arginine residues in a large number of proteins. Is part of the bacterial stress response system. Protein arginine phosphorylation has a physiologically important role and is involved in the regulation of many critical cellular processes, such as protein homeostasis, motility, competence, and stringent and stress responses, by regulating gene expression and protein activity. This chain is Protein-arginine kinase, found in Bacillus mycoides (strain KBAB4) (Bacillus weihenstephanensis).